The sequence spans 399 residues: Galactokinase (399 aa).

Residue 42–45 (EHTD) participates in substrate binding. ATP contacts are provided by residues Ser76 and 133 to 139 (ASGLSSS). Mg(2+) contacts are provided by Ser139 and Glu171. Asp183 (proton acceptor) is an active-site residue. Position 233 (Tyr233) interacts with substrate.

It belongs to the GHMP kinase family. GalK subfamily. In terms of assembly, monomer.

The protein resides in the cytoplasm. It catalyses the reaction alpha-D-galactose + ATP = alpha-D-galactose 1-phosphate + ADP + H(+). Its pathway is carbohydrate metabolism; galactose metabolism. In terms of biological role, catalyzes the transfer of the gamma-phosphate of ATP to D-galactose to form alpha-D-galactose-1-phosphate (Gal-1-P). The sequence is that of Galactokinase from Lactococcus lactis subsp. lactis (strain IL1403) (Streptococcus lactis).